A 159-amino-acid chain; its full sequence is uncharacterized protein (159 aa).

Transmembrane regions (helical) follow at residues 76-96, 104-124, and 131-151; these read AIKY…FIGK, IVML…FSPT, and FGAG…VIGG.

It is found in the membrane. This is an uncharacterized protein from Acanthamoeba polyphaga (Amoeba).